The primary structure comprises 810 residues: Phenylalanine--tRNA ligase beta subunit (810 aa).

The tRNA-binding domain maps to 39-150 (RSWAAGVVLG…LDLPSGSPVG (112 aa)). One can recognise a B5 domain in the interval 407–495 (RGEAIINLRL…RLYGYDHFCE (89 aa)). D473, D479, E482, and E483 together coordinate Mg(2+). The region spanning 716 to 809 (SPYPAVARDL…LTKQFAVSLR (94 aa)) is the FDX-ACB domain.

The protein belongs to the phenylalanyl-tRNA synthetase beta subunit family. Type 1 subfamily. Tetramer of two alpha and two beta subunits. Mg(2+) serves as cofactor.

The protein resides in the cytoplasm. The catalysed reaction is tRNA(Phe) + L-phenylalanine + ATP = L-phenylalanyl-tRNA(Phe) + AMP + diphosphate + H(+). The polypeptide is Phenylalanine--tRNA ligase beta subunit (pheT) (Synechocystis sp. (strain ATCC 27184 / PCC 6803 / Kazusa)).